Here is a 386-residue protein sequence, read N- to C-terminus: Latent membrane protein 1 (386 aa).

At Asp-2–Ser-23 the chain is on the cytoplasmic side. Residues Ser-24–Met-44 traverse the membrane as a helical segment. At Ser-45–Ala-51 the chain is on the extracellular side. Residues Leu-52–Phe-72 form a helical membrane-spanning segment. Residues Arg-73–Asp-75 are Cytoplasmic-facing. The helical transmembrane segment at Leu-76–Ala-96 threads the bilayer. Over Leu-97 to Tyr-106 the chain is Extracellular. The helical transmembrane segment at Leu-107–Leu-127 threads the bilayer. Over Glu-128 to Gln-139 the chain is Cytoplasmic. The chain crosses the membrane as a helical span at residues Leu-140–Leu-160. Over Gln-161–Asn-163 the chain is Extracellular. The helical transmembrane segment at Trp-164–Met-184 threads the bilayer. The Cytoplasmic segment spans residues Tyr-185 to Asp-386. A CTAR1 region spans residues Glu-194–Gly-232. The segment at Glu-194–Asp-386 is disordered. Low complexity-rich tracts occupy residues Asp-209 to Asn-220 and Asn-251 to Pro-267. Positions Gly-342 to Asp-386 are CTAR2. Residues His-346–Asp-356 are compositionally biased toward basic and acidic residues. Low complexity predominate over residues Pro-357 to Thr-366.

Belongs to the herpesviridae LMP-1 family. In terms of assembly, interacts (via PXQXT motif) with host tumor necrosis factor receptor-associated factor (TRAF) proteins TRAF1, TRAF2, TRAF3 and TRAF5. Interacts with TRAF3; this interaction activates B lymphocytes. Interacts with human protein ZMYND11; leading to negatively regulate NF-kappa-B activation. Interacts with host UBE2I; this interaction induces the sumoylation of various cellular proteins. Interacts with host IRF7. Interacts with host TYK2. Post-translationally, ubiquitinated on the N-terminus.

The protein localises to the host cell membrane. Acts as a CD40 functional homolog to prevent apoptosis of infected B-lymphocytes and drive their proliferation. Functions as a constitutively active tumor necrosis factor receptor that induces the activation of several signaling pathways, including those of the NF-kappa-B family. LMP1 signaling leads to up-regulation of antiapoptotic proteins and provide growth signals in latently infected cells. Interacts with host UBE2I and subsequently affects the sumoylation state of several cellular proteins. For example, induces the sumoylation of host IRF7 thereby limiting its transcriptional activity and modulating the activation of innate immune responses. Also inhibits host IFN-alpha-stimulated STAT2 nuclear translocation and interferon-stimulated response element transcriptional activity by interacting with and inhibiting host TYK2. Induces SUMO expression during viral latency thereby dysregulating the host sumoylation processes. This is Latent membrane protein 1 (LMP1) from Homo sapiens (Human).